Here is a 359-residue protein sequence, read N- to C-terminus: WAT1-related protein At4g16620 (359 aa).

The next 10 membrane-spanning stretches (helical) occupy residues 5–25 (ETLIEAGIIGGLAGAQVIYAG), 41–61 (LLIVILCTFASVLLITPLAFL), 77–97 (IKLVLVALAGVTLFQGLFLEG), 105–125 (MATAMPNLCPAFIFVIAWAAG), 143–163 (TVLCVMGALIMSLMHSTTATL), 183–203 (ILGCLYLLLAICGLSSSIVLQ), 206–226 (ILAEFPAPISMFSMVSLMGGI), 246–266 (VIGLGHLVGYAILGGLVSGGG), 279–299 (PVIVSLFSPIATVVCVVVSAF), and 305–325 (FNLGSFAGMALMFGGLYFVLW). The region spanning 30–154 (LSQLLSLGID…LCVMGALIMS (125 aa)) is the EamA 1 domain. The 119-residue stretch at 206 to 324 (ILAEFPAPIS…LMFGGLYFVL (119 aa)) folds into the EamA 2 domain.

Belongs to the drug/metabolite transporter (DMT) superfamily. Plant drug/metabolite exporter (P-DME) (TC 2.A.7.4) family.

It is found in the membrane. In Arabidopsis thaliana (Mouse-ear cress), this protein is WAT1-related protein At4g16620.